Consider the following 75-residue polypeptide: MGSFSIWHWLIVLVIVALVFGTKKLRNIGSDLGGAVKGFKEGMKDANSDKPAEQVTQQKVADDTIDVQAKEKTNS.

The chain crosses the membrane as a helical span at residues 1–21 (MGSFSIWHWLIVLVIVALVFG). Positions 44 to 75 (KDANSDKPAEQVTQQKVADDTIDVQAKEKTNS) are disordered.

It belongs to the TatA/E family. As to quaternary structure, the Tat system comprises two distinct complexes: a TatABC complex, containing multiple copies of TatA, TatB and TatC subunits, and a separate TatA complex, containing only TatA subunits. Substrates initially bind to the TatABC complex, which probably triggers association of the separate TatA complex to form the active translocon.

It localises to the cell inner membrane. Functionally, part of the twin-arginine translocation (Tat) system that transports large folded proteins containing a characteristic twin-arginine motif in their signal peptide across membranes. TatA could form the protein-conducting channel of the Tat system. The chain is Sec-independent protein translocase protein TatA from Bordetella petrii (strain ATCC BAA-461 / DSM 12804 / CCUG 43448).